We begin with the raw amino-acid sequence, 509 residues long: Lanosterol 14-alpha demethylase (509 aa).

Residues glycine 30 to phenylalanine 50 form a helical membrane-spanning segment. Residue cysteine 455 participates in heme binding.

The protein belongs to the cytochrome P450 family. Heme is required as a cofactor. Ubiquitinated by MARCHF6, leading to proteasomal degradation.

It is found in the endoplasmic reticulum membrane. Its subcellular location is the microsome membrane. It carries out the reaction a 14alpha-methyl steroid + 3 reduced [NADPH--hemoprotein reductase] + 3 O2 = a Delta(14) steroid + formate + 3 oxidized [NADPH--hemoprotein reductase] + 4 H2O + 4 H(+). The enzyme catalyses lanosterol + 3 reduced [NADPH--hemoprotein reductase] + 3 O2 = 4,4-dimethyl-5alpha-cholesta-8,14,24-trien-3beta-ol + formate + 3 oxidized [NADPH--hemoprotein reductase] + 4 H2O + 4 H(+). The catalysed reaction is 24,25-dihydrolanosterol + 3 reduced [NADPH--hemoprotein reductase] + 3 O2 = 4,4-dimethyl-8,14-cholestadien-3beta-ol + formate + 3 oxidized [NADPH--hemoprotein reductase] + 4 H2O + 4 H(+). It catalyses the reaction a 14alpha-methyl steroid + reduced [NADPH--hemoprotein reductase] + O2 = a 14alpha-hydroxymethyl steroid + oxidized [NADPH--hemoprotein reductase] + H2O + H(+). It carries out the reaction a 14alpha-hydroxymethyl steroid + reduced [NADPH--hemoprotein reductase] + O2 = a 14alpha-formyl steroid + oxidized [NADPH--hemoprotein reductase] + 2 H2O + H(+). The enzyme catalyses a 14alpha-formyl steroid + reduced [NADPH--hemoprotein reductase] + O2 = a Delta(14) steroid + formate + oxidized [NADPH--hemoprotein reductase] + H2O + 2 H(+). The catalysed reaction is lanosterol + reduced [NADPH--hemoprotein reductase] + O2 = 32-hydroxylanosterol + oxidized [NADPH--hemoprotein reductase] + H2O + H(+). It catalyses the reaction 32-hydroxylanosterol + reduced [NADPH--hemoprotein reductase] + O2 = 32-oxolanosterol + oxidized [NADPH--hemoprotein reductase] + 2 H2O + H(+). It carries out the reaction 32-oxolanosterol + reduced [NADPH--hemoprotein reductase] + O2 = 4,4-dimethyl-5alpha-cholesta-8,14,24-trien-3beta-ol + formate + oxidized [NADPH--hemoprotein reductase] + H2O + 2 H(+). The enzyme catalyses 24,25-dihydrolanosterol + reduced [NADPH--hemoprotein reductase] + O2 = 32-hydroxy-24,25-dihydrolanosterol + oxidized [NADPH--hemoprotein reductase] + H2O + H(+). The catalysed reaction is 32-hydroxy-24,25-dihydrolanosterol + reduced [NADPH--hemoprotein reductase] + O2 = 32-oxo-24,25-dihydrolanosterol + oxidized [NADPH--hemoprotein reductase] + 2 H2O + H(+). It catalyses the reaction 32-oxo-24,25-dihydrolanosterol + reduced [NADPH--hemoprotein reductase] + O2 = 4,4-dimethyl-8,14-cholestadien-3beta-ol + formate + oxidized [NADPH--hemoprotein reductase] + H2O + 2 H(+). The protein operates within steroid biosynthesis; zymosterol biosynthesis; zymosterol from lanosterol: step 1/6. With respect to regulation, inhibited by azalanstat. Inhibited by azole antifungal agents ketoconazole, itraconazole and fluconazole. Sterol 14alpha-demethylase that plays a critical role in the cholesterol biosynthesis pathway, being cholesterol the major sterol component in mammalian membranes as well as a precursor for bile acid and steroid hormone synthesis. Cytochrome P450 monooxygenase that catalyzes the three-step oxidative removal of the 14alpha-methyl group (C-32) of sterols such as lanosterol (lanosta-8,24-dien-3beta-ol) and 24,25-dihydrolanosterol (DHL) in the form of formate, and converts the sterols to 4,4-dimethyl-5alpha-cholesta-8,14,24-trien-3beta-ol and 4,4-dimethyl-8,14-cholestadien-3beta-ol, respectively, which are intermediates of cholesterol biosynthesis. Can also demethylate substrates not intrinsic to mammals, such as eburicol (24-methylene-24,25-dihydrolanosterol), but at a lower rate than DHL. The polypeptide is Lanosterol 14-alpha demethylase (Pongo abelii (Sumatran orangutan)).